The primary structure comprises 432 residues: Glutamyl-tRNA reductase (432 aa).

Substrate contacts are provided by residues 55–58 (TCNR), S114, 119–121 (ETQ), and Q125. The active-site Nucleophile is the C56. 194 to 199 (GAGEMI) contacts NADP(+).

This sequence belongs to the glutamyl-tRNA reductase family. In terms of assembly, homodimer.

It catalyses the reaction (S)-4-amino-5-oxopentanoate + tRNA(Glu) + NADP(+) = L-glutamyl-tRNA(Glu) + NADPH + H(+). It functions in the pathway porphyrin-containing compound metabolism; protoporphyrin-IX biosynthesis; 5-aminolevulinate from L-glutamyl-tRNA(Glu): step 1/2. Catalyzes the NADPH-dependent reduction of glutamyl-tRNA(Glu) to glutamate 1-semialdehyde (GSA). The sequence is that of Glutamyl-tRNA reductase from Burkholderia lata (strain ATCC 17760 / DSM 23089 / LMG 22485 / NCIMB 9086 / R18194 / 383).